The primary structure comprises 188 residues: Adenine phosphoribosyltransferase (188 aa).

It belongs to the purine/pyrimidine phosphoribosyltransferase family. As to quaternary structure, homodimer.

It is found in the cytoplasm. It catalyses the reaction AMP + diphosphate = 5-phospho-alpha-D-ribose 1-diphosphate + adenine. The protein operates within purine metabolism; AMP biosynthesis via salvage pathway; AMP from adenine: step 1/1. Its function is as follows. Catalyzes a salvage reaction resulting in the formation of AMP, that is energically less costly than de novo synthesis. This chain is Adenine phosphoribosyltransferase, found in Neisseria meningitidis serogroup C (strain 053442).